A 200-amino-acid polypeptide reads, in one-letter code: 3-isopropylmalate dehydratase small subunit (200 aa).

This sequence belongs to the LeuD family. LeuD type 1 subfamily. As to quaternary structure, heterodimer of LeuC and LeuD.

It catalyses the reaction (2R,3S)-3-isopropylmalate = (2S)-2-isopropylmalate. It functions in the pathway amino-acid biosynthesis; L-leucine biosynthesis; L-leucine from 3-methyl-2-oxobutanoate: step 2/4. Functionally, catalyzes the isomerization between 2-isopropylmalate and 3-isopropylmalate, via the formation of 2-isopropylmaleate. The chain is 3-isopropylmalate dehydratase small subunit from Edwardsiella ictaluri (strain 93-146).